We begin with the raw amino-acid sequence, 257 residues long: Protein YIPF5 (257 aa).

The Cytoplasmic portion of the chain corresponds to 1 to 124 (MSGFENLNTD…KVADGSIMNE (124 aa)). Residues 75–106 (PASPQPFYGNSFEDEPPLLEELGINFDHIWQK) are interaction with Sec23. A helical membrane pass occupies residues 125 to 145 (TDLAGPMVFCLAFGATLLLAG). Lys146 is a topological domain (lumenal). A helical transmembrane segment spans residues 147–167 (IQFGYVYGISAIGCLGMFCLL). The Cytoplasmic portion of the chain corresponds to 168–173 (NLMSMT). Residues 174-194 (GVSFGCVASVLGYCLLPMILL) traverse the membrane as a helical segment. Over 195 to 196 (SS) the chain is Lumenal. Residues 197–217 (FAVIFSLQGMVGIILTAGIIG) form a helical membrane-spanning segment. Over 218-236 (WCSFSASKIFISALAMEGQ) the chain is Cytoplasmic. The helical transmembrane segment at 237–257 (QLLVAYPCALLYGVFALISVF) threads the bilayer.

Belongs to the YIP1 family. In terms of assembly, interacts with the COPII coat components Sec23 (SEC23A and/or SEC23B) and Sec24 (SEC24A and/or SEC24B). Interacts with YIF1A. May interact with RAB1A. Interacts with YIPF3 and YIPF4.

It localises to the endoplasmic reticulum membrane. It is found in the golgi apparatus. The protein resides in the cis-Golgi network membrane. Its subcellular location is the cytoplasmic vesicle. The protein localises to the COPII-coated vesicle. Plays a role in transport between endoplasmic reticulum and Golgi. In pancreatic beta cells, required to transport proinsulin from endoplasmic reticulum into the Golgi. This Macaca fascicularis (Crab-eating macaque) protein is Protein YIPF5 (YIPF5).